We begin with the raw amino-acid sequence, 218 residues long: Urease accessory protein UreG (218 aa).

Position 22 to 29 (G22 to T29) interacts with GTP.

It belongs to the SIMIBI class G3E GTPase family. UreG subfamily. In terms of assembly, homodimer. UreD, UreF and UreG form a complex that acts as a GTP-hydrolysis-dependent molecular chaperone, activating the urease apoprotein by helping to assemble the nickel containing metallocenter of UreC. The UreE protein probably delivers the nickel.

Its subcellular location is the cytoplasm. Its function is as follows. Facilitates the functional incorporation of the urease nickel metallocenter. This process requires GTP hydrolysis, probably effectuated by UreG. The protein is Urease accessory protein UreG of Polaromonas sp. (strain JS666 / ATCC BAA-500).